A 37-amino-acid polypeptide reads, in one-letter code: Potassium channel toxin alpha-KTx 15.1 (37 aa).

A Pyrrolidone carboxylic acid modification is found at Gln1. 3 cysteine pairs are disulfide-bonded: Cys8/Cys28, Cys13/Cys33, and Cys17/Cys35.

It belongs to the short scorpion toxin superfamily. Potassium channel inhibitor family. Alpha-KTx 15 subfamily. Expressed by the venom gland.

The protein resides in the secreted. Blocker of voltage-gated potassium channels (600 nM of the toxin induces a block of 25% of hERG currents). May also inhibit Kv4/KCND when coexpressed with DPP6 or DPP10. In adult rat brain, it blocks the transient potassium channels in cerebellum granular cells. Blocks potassium channels by a simple 'plugging mechanism', in which a single toxin molecule finds a specific receptor site in the external vestibule of the potassium channel and thereby occludes the outer entry to the potassium conducting pore. The chain is Potassium channel toxin alpha-KTx 15.1 from Androctonus australis (Sahara scorpion).